Reading from the N-terminus, the 523-residue chain is Polypyrimidine tract-binding protein 3 (523 aa).

Residues 1-25 (MNSSTSAGVYANGNDNKKFKGDRPP) form a disordered region. 3 consecutive RRM domains span residues 30 to 114 (RVLH…NLPN), 153 to 229 (LRII…FSKL), and 329 to 403 (SVLL…LSKH). Residue K36 forms a Glycyl lysine isopeptide (Lys-Gly) (interchain with G-Cter in SUMO2) linkage. Y98 is subject to Phosphotyrosine. Residue T109 is modified to Phosphothreonine. K187 participates in a covalent cross-link: Glycyl lysine isopeptide (Lys-Gly) (interchain with G-Cter in SUMO2). K394 carries the post-translational modification N6-acetyllysine. A disordered region spans residues 406–426 (VQLPREGQEDQGLTKDFSNSP). Position 425 is a phosphoserine (S425). The 76-residue stretch at 446–521 (ATLHLSNIPP…HHLRVSFSKS (76 aa)) folds into the RRM 4 domain.

Interacts with THBS4 (via the acidic amphipathic C-terminus).

In terms of biological role, RNA-binding protein that mediates pre-mRNA alternative splicing regulation. Plays a role in the regulation of cell proliferation, differentiation and migration. Positive regulator of EPO-dependent erythropoiesis. Participates in cell differentiation regulation by repressing tissue-specific exons. Promotes Fas exon 6 skipping. Binds RNA, preferentially to both poly(G) and poly(U). This chain is Polypyrimidine tract-binding protein 3 (Ptbp3), found in Mus musculus (Mouse).